Consider the following 430-residue polypeptide: Synaptotagmin-11 (430 aa).

Residues 1-15 (MAEITNIRPSFDVSP) lie on the Vesicular side of the membrane. The chain crosses the membrane as a helical span at residues 16 to 36 (VAAGLIGASVLVVCVSVTVFV). Residues 37 to 430 (WTCCHQQAEK…IAKWHSLSEY (394 aa)) lie on the Cytoplasmic side of the membrane. Residues 79 to 90 (RRDKDGPRRESG) show a composition bias toward basic and acidic residues. 2 disordered regions span residues 79–120 (RRDK…CMDQ) and 132–152 (RSPMTSLTPGESKATSPSSPE). The residue at position 133 (Ser-133) is a Phosphoserine. Polar residues predominate over residues 134-150 (PMTSLTPGESKATSPSS). 2 consecutive C2 domains span residues 156–278 (MLGS…QLTR) and 290–425 (SRGE…AKWH). Asp-249, Ser-252, and Asp-255 together coordinate Ca(2+).

This sequence belongs to the synaptotagmin family. Homodimer. Can also form heterodimers. Interacts with PRKN. Interacts (via C2 2 domain) with AGO2 and SND1; the interaction with SND1 is direct. Interacts with KIF1A; the interaction increases in presence of calcium. The cofactor is Ca(2+). Post-translationally, ubiquitinated, at least by PRKN, and targeted to the proteasome complex for degradation. Ubiquitination is inhibited by ATP13A2. As to expression, expressed in cerebellun, cerebellar cortex, hippocampus, olfactory bulb and spinal cord (at protein level). Expressed by neurons, astrocytes and microglia (at protein level). Expressed in macrophages (at protein level).

It localises to the cytoplasmic vesicle membrane. It is found in the perikaryon. The protein resides in the golgi apparatus. The protein localises to the trans-Golgi network membrane. Its subcellular location is the recycling endosome membrane. It localises to the lysosome membrane. It is found in the cytoplasmic vesicle. The protein resides in the phagosome. The protein localises to the cell projection. Its subcellular location is the axon. It localises to the dendrite. It is found in the postsynaptic density. The protein resides in the clathrin-coated vesicle membrane. Functionally, synaptotagmin family member involved in vesicular and membrane trafficking which does not bind Ca(2+). Inhibits clathrin-mediated and bulk endocytosis, functions to ensure precision in vesicle retrieval. Plays an important role in dopamine transmission by regulating endocytosis and the vesicle-recycling process. Essential component of a neuronal vesicular trafficking pathway that differs from the synaptic vesicle trafficking pathway but is crucial for development and synaptic plasticity. In macrophages and microglia, inhibits the conventional cytokine secretion, of at least IL6 and TNF, and phagocytosis. In astrocytes, regulates lysosome exocytosis, mechanism required for the repair of injured astrocyte cell membrane. Required for the ATP13A2-mediated regulation of the autophagy-lysosome pathway. The chain is Synaptotagmin-11 from Mus musculus (Mouse).